The sequence spans 147 residues: MNRNDITEKIITTKVAKGITWESVAKKVGLSKEWVTAGCLGQMTFDEKQAKVVGKIFGLTAEEQKWLQVVPYKGSLPTPVPTDPLIYRWYEIVSVYGTTIKELIHEEFGDGIMSAIDFSMDIVRQPDPKGDRVNVVLSGKFLPYKTY.

Active-site residues include Arg88, Glu91, and Ser114.

Belongs to the cyanase family.

It carries out the reaction cyanate + hydrogencarbonate + 3 H(+) = NH4(+) + 2 CO2. In terms of biological role, catalyzes the reaction of cyanate with bicarbonate to produce ammonia and carbon dioxide. The protein is Cyanate hydratase of Polaromonas sp. (strain JS666 / ATCC BAA-500).